Reading from the N-terminus, the 566-residue chain is MAATHLHIPPNPKTQTSHQNPPFWFSSKTGIYTSKFPSLHLPVDPNLDAVSALFSHKHHGDTALIDSLTGFSISHTELQIMVQSMAAGIYHVLGVRQGDVVSLVLPNSVYFPMIFLSLISLGAIVTTMNPSSSLGEIKKQVSECSVGLAFTSTENVEKLSSLGVSVISVSESYDFDSIRIENPKFYSIMKESFGFVPKPLIKQDDVAAIMYSSGTTGASKGVLLTHRNLIASMELFVRFEASQYEYPGSSNVYLAALPLCHIYGLSLFVMGLLSLGSTIVVMKRFDASDVVNVIERFKITHFPVVPPMLMALTKKAKGVCGEVFKSLKQVSSGAAPLSRKFIEDFLQTLPHVDLIQGYGMTESTAVGTRGFNSEKLSRYSSVGLLAPNMQAKVVDWSSGSFLPPGNRGELWIQGPGVMKGYLNNPKATQMSIVEDSWLRTGDIAYFDEDGYLFIVDRIKEIIKYKGFQIAPADLEAVLVSHPLIIDAAVTAAPNEECGEIPVAFVVRRQETTLSEEDVISYVASQVAPYRKVRKVVMVNSIPKSPTGKILRKELKRILTNSVSSRL.

Positions 1–21 (MAATHLHIPPNPKTQTSHQNP) are disordered. Ser-212, Ser-213, Gly-214, Thr-215, Thr-216, and Lys-220 together coordinate ATP. Tyr-263 lines the (E)-4-coumaroyl-AMP pocket. Arg-284 contributes to the CoA binding site. The SBD1 stretch occupies residues 286–356 (DASDVVNVIE…QTLPHVDLIQ (71 aa)). (E)-4-coumaroyl-AMP is bound by residues Ala-334, Gln-356, Gly-357, and Thr-361. ATP contacts are provided by Gln-356, Gly-357, Thr-361, Asp-442, and Arg-457. Positions 357-421 (GYGMTESTAV…IQGPGVMKGY (65 aa)) are SBD2. (E)-4-coumaroyl-AMP is bound by residues Lys-459 and Lys-463. CoA is bound by residues Lys-465 and Gly-466. Lys-548 is a binding site for ATP. The short motif at 564 to 566 (SRL) is the Microbody targeting signal element.

Belongs to the ATP-dependent AMP-binding enzyme family. The cofactor is Mg(2+). As to expression, expressed at very low level in leaves.

The protein localises to the peroxisome. It catalyses the reaction (E)-4-coumarate + ATP + CoA = (E)-4-coumaroyl-CoA + AMP + diphosphate. It carries out the reaction (E)-4-coumarate + ATP + H(+) = (E)-4-coumaroyl-AMP + diphosphate. The enzyme catalyses (E)-4-coumaroyl-AMP + CoA = (E)-4-coumaroyl-CoA + AMP + H(+). The catalysed reaction is (E)-ferulate + ATP + CoA = (E)-feruloyl-CoA + AMP + diphosphate. It catalyses the reaction (E)-ferulate + ATP + H(+) = (E)-feruloyl-AMP + diphosphate. It carries out the reaction (E)-feruloyl-AMP + CoA = (E)-feruloyl-CoA + AMP + H(+). The enzyme catalyses (E)-caffeate + ATP + CoA = (E)-caffeoyl-CoA + AMP + diphosphate. The catalysed reaction is (E)-caffeate + ATP + H(+) = (E)-caffeoyl-AMP + diphosphate. It catalyses the reaction (E)-caffeoyl-AMP + CoA = (E)-caffeoyl-CoA + AMP + H(+). It carries out the reaction (E)-cinnamate + ATP + CoA = (E)-cinnamoyl-CoA + AMP + diphosphate. The enzyme catalyses 4-hydroxybenzoate + ATP + CoA = 4-hydroxybenzoyl-CoA + AMP + diphosphate. The catalysed reaction is tetradecanoate + ATP + CoA = tetradecanoyl-CoA + AMP + diphosphate. It catalyses the reaction hexanoate + ATP + CoA = hexanoyl-CoA + AMP + diphosphate. It carries out the reaction heptanoate + ATP + CoA = heptanoyl-CoA + AMP + diphosphate. In terms of biological role, contributes to jasmonic acid biosynthesis by initiating the beta-oxidative chain shortening of its precursors. Acts as a carboxylate--CoA ligase that can use preferentially p-coumarate, ferulate and caffeate as substrates and, with a lower efficiency, (E)-cinnamate and 4-hydroxybenzoate as substrates. Involved in the biosynthesis of ubiquinone from phenylalanine by activating the propyl side chain of 4-coumarate, and possibly trans-cinnamate and 4-hydroxybenzoate, for subsequent beta-oxidative shortening and the formation of the benzenoid moiety of ubiquinone. Follows a two-step reaction mechanism, wherein the carboxylate substrate first undergoes adenylation by ATP, followed by a thioesterification in the presence of CoA to yield the final CoA thioester. The polypeptide is 4-coumarate--CoA ligase-like 6 (Arabidopsis thaliana (Mouse-ear cress)).